The chain runs to 501 residues: MFSNQYIQQRIHKANSLREEGKNPYKNGLKRSLTNAAFLEKYAYVKDLEEPKDKEKCESIVGRVKLLRLMGKACFIKIEDESAILQAYVSQNELNDEFKSLKKHLEVGDIVLVKGFPFATKTGELSVHALEFHILSKTIVPLPEKFHGLSDIELRYRQRYLDLIVNPGVKDVFKKRSLIVSSVRKFFEMEGFLEVETPMMHPIPGGANARPFITYHNALEVERYLRIAPELYLKRLIVGGFEAVFEINRNFRNEGMDHSHNPEFTMIEFYWAYHTYEDLIELSKRLFDYLLKTLNLDSKIIYNDMEVDFNQTSVISYLDALETIGGISRGILEKEDRLLAYLLEQGVKVEPNLTYGKLLAEAFDHFVEHKLINPTFVTQYPIEISPLARRNDSNPNIADRFELFIAGKEIANGFSELNDPLDQLERFKNQVAEKEKGDEEAQYMDEDYVWALAHGMPPTAGQGIGIDRLVMLLTGAKSIKDVILFPAMRPVKNDFNVESGE.

Residues Glu402 and Glu409 each contribute to the Mg(2+) site.

The protein belongs to the class-II aminoacyl-tRNA synthetase family. Homodimer. Mg(2+) is required as a cofactor.

Its subcellular location is the cytoplasm. The enzyme catalyses tRNA(Lys) + L-lysine + ATP = L-lysyl-tRNA(Lys) + AMP + diphosphate. The sequence is that of Lysine--tRNA ligase from Helicobacter pylori (strain G27).